We begin with the raw amino-acid sequence, 137 residues long: Large ribosomal subunit protein uL16 (137 aa).

This sequence belongs to the universal ribosomal protein uL16 family. As to quaternary structure, part of the 50S ribosomal subunit.

Its function is as follows. Binds 23S rRNA and is also seen to make contacts with the A and possibly P site tRNAs. The sequence is that of Large ribosomal subunit protein uL16 from Francisella tularensis subsp. holarctica (strain FTNF002-00 / FTA).